A 532-amino-acid chain; its full sequence is Small ribosomal subunit protein uS2cz (532 aa).

Residues 1 to 271 (METLEKNFKK…SPISSKEKKA (271 aa)) form an N-terminal extension region. TRAM domains are found at residues 38 to 97 (ALQA…SILN), 127 to 186 (DFKV…KPIL), and 197 to 260 (NQMI…KILK).

It belongs to the universal ribosomal protein uS2 family.

The protein localises to the plastid. Its subcellular location is the chloroplast. The chain is Small ribosomal subunit protein uS2cz (rps2-1) from Tetradesmus obliquus (Green alga).